A 109-amino-acid polypeptide reads, in one-letter code: Nucleoid-associated protein MS1507 (109 aa).

The interval 1-21 (MFGKGGLGNLMKQAQQMQERM) is disordered.

This sequence belongs to the YbaB/EbfC family. As to quaternary structure, homodimer.

Its subcellular location is the cytoplasm. The protein resides in the nucleoid. In terms of biological role, binds to DNA and alters its conformation. May be involved in regulation of gene expression, nucleoid organization and DNA protection. This chain is Nucleoid-associated protein MS1507, found in Mannheimia succiniciproducens (strain KCTC 0769BP / MBEL55E).